A 510-amino-acid polypeptide reads, in one-letter code: 2,3-bisphosphoglycerate-independent phosphoglycerate mutase (510 aa).

Mn(2+) contacts are provided by Asp12 and Ser62. The Phosphoserine intermediate role is filled by Ser62. Residues His123, Arg153 to Asp154, Arg185, Arg191, Arg260 to Arg263, and Lys335 each bind substrate. Mn(2+) is bound by residues Asp402, His406, Asp443, His444, and His461.

This sequence belongs to the BPG-independent phosphoglycerate mutase family. As to quaternary structure, monomer. It depends on Mn(2+) as a cofactor.

The catalysed reaction is (2R)-2-phosphoglycerate = (2R)-3-phosphoglycerate. It functions in the pathway carbohydrate degradation; glycolysis; pyruvate from D-glyceraldehyde 3-phosphate: step 3/5. Catalyzes the interconversion of 2-phosphoglycerate and 3-phosphoglycerate. The polypeptide is 2,3-bisphosphoglycerate-independent phosphoglycerate mutase (Listeria monocytogenes serotype 4b (strain F2365)).